Consider the following 646-residue polypeptide: Type I inositol polyphosphate 5-phosphatase 2 (646 aa).

Residues 59–74 are compositionally biased toward basic and acidic residues; that stretch reads TDEDSHNGRRGSEADH. Disordered regions lie at residues 59–99, 185–207, and 329–369; these read TDED…GKSE, ESVY…SAPS, and IDNR…IRNS. Polar residues predominate over residues 188-207; the sequence is YDQSPSCNNNALHRSHSAPS. Positions 341 to 350 are enriched in basic and acidic residues; that stretch reads EAAKIMHDDS. Catalytic regions lie at residues 495-510 and 575-590; these read DQVF…LNMS and KKRA…WLGK.

This sequence belongs to the inositol polyphosphate 5-phosphatase family. Expressed ubiquitously.

It catalyses the reaction 1D-myo-inositol 1,4,5-trisphosphate + H2O = 1D-myo-inositol 1,4-bisphosphate + phosphate. The enzyme catalyses 1D-myo-inositol 1,3,4,5-tetrakisphosphate + H2O = 1D-myo-inositol 1,3,4-trisphosphate + phosphate. Functionally, has phosphatase activity toward Ins(1,4,5)P3 and Ins(1,3,4,5)P4. Seems to be involved in the abscisic acid (ABA) signaling pathway. Could also be able to hydrolyze PtdIns(4,5)P2 and PtdIns(3,4,5)P3. The polypeptide is Type I inositol polyphosphate 5-phosphatase 2 (Arabidopsis thaliana (Mouse-ear cress)).